Here is a 385-residue protein sequence, read N- to C-terminus: MSSAATSGEYWLISVPGEKGANDAWDKLNRATGNISTNSKYLIPDLKVGTLDQLVGLSDDLSKLDTSAEGVIRKLVQYFTEVLEEDKSKIAENLVIGNKDMKTYVTKFQWEGAKYPLKQSLKVLSEIIGKQITQIDNDLKMKSLAYNNLKNALASMDRKTTGSLLTKDLADLVKAEDFVLNSEYLQTIIVVVPKILVKEWETKYATLSSMVVPGSSKLLTEEGEHALYTVTLFKKVIDEFKNIARENKFIVRDFVYDEETLKAGRTERDKLLAEKQKQYAPLIRWLKINFGEIFSAYIHIKALRVFVESVLRYGLPVNFQAAVIEPAKGQSKKLRQELQKLYIHLDGSAAGPIDTLEDSPALMSLGVNEYYPYVFFKLNIDFSNK.

Belongs to the V-ATPase C subunit family. V-ATPase is a heteromultimeric enzyme made up of two complexes: the ATP-hydrolytic V1 complex and the proton translocation V0 complex. The V1 complex consists of three catalytic AB heterodimers that form a heterohexamer, three peripheral stalks each consisting of EG heterodimers, one central rotor including subunits D and F, and the regulatory subunits C and H. The proton translocation complex V0 consists of the proton transport subunit a, a ring of proteolipid subunits c9c'', rotary subunit d, subunits e and f, and the accessory subunits vah-19/Ac45 and vah-20/PRR. Interacts with V-type proton ATPase subunits a1 unc-32, a2 vha-5 and a3 vha-6.

It localises to the cytoplasm. The protein resides in the membrane. Its function is as follows. Subunit of the V1 complex of vacuolar(H+)-ATPase (V-ATPase), a multisubunit enzyme composed of a peripheral complex (V1) that hydrolyzes ATP and a membrane integral complex (V0) that translocates protons. V-ATPase is responsible for acidifying and maintaining the pH of intracellular compartments and in some cell types, is targeted to the plasma membrane, where it is responsible for acidifying the extracellular environment. Subunit C is necessary for the assembly of the catalytic sector of the enzyme and is likely to have a specific function in its catalytic activity. Has roles in embryogenesis and ovulation. The protein is V-type proton ATPase subunit C of Caenorhabditis briggsae.